We begin with the raw amino-acid sequence, 204 residues long: Ancillary SecYEG translocon subunit (204 aa).

The Cytoplasmic segment spans residues 1–23 (MAYSIEEEQEINQLKDWWKENGK). The helical transmembrane segment at 24–42 (TIIVAFILGVGGMFGWRYW) threads the bilayer. Topologically, residues 43-204 (QTHQAEQIAQ…QMAKMKLNNL (162 aa)) are periplasmic.

It belongs to the YfgM family. As to quaternary structure, interacts with the SecYEG translocon. Forms a complex with PpiD.

The protein localises to the cell inner membrane. May mediate protein transfer from the SecYEG translocon to the periplasmic chaperone network via its periplasmic C-terminal region. The polypeptide is Ancillary SecYEG translocon subunit (Haemophilus influenzae (strain ATCC 51907 / DSM 11121 / KW20 / Rd)).